Consider the following 308-residue polypeptide: Apolipoprotein E (308 aa).

The N-terminal stretch at 1–18 (MKFLWAALVVTLLAGCRA) is a signal peptide. Repeat copies occupy residues 75 to 96 (LLIEETMKEVKAYKEELEKQVG), 97 to 118 (PIAQETQARLSKELQAAQARLE), 119 to 140 (SDMEDVRTRLAQYRSEAQAALG), 141 to 162 (QNTDDLQGRLASHLRKLRKRLL), 163 to 184 (RDAEDLQKRLAVYQAGTHEAAE), 185 to 206 (RGVSAIHERLGPLMMEGPLQAI), 207 to 224 (PPSQQLRERAEAWGQKVR), and 225 to 246 (GRLESVGSQARDRLDDMRDQME). An 8 X 22 AA approximate tandem repeats region spans residues 75 to 246 (LLIEETMKEV…RLDDMRDQME (172 aa)). The interval 153–163 (HLRKLRKRLLR) is LDL and other lipoprotein receptors binding. 157–160 (LRKR) lines the heparin pocket. Positions 205 to 281 (AIPPSQQLRE…SWFEPLVQDM (77 aa)) are lipid-binding and lipoprotein association. 220-227 (GQKVRGRL) provides a ligand contact to heparin. The homooligomerization stretch occupies residues 257–308 (SQVRLQAEAFQTRLKSWFEPLVQDMQRQWASLVEKVQSTLGISPSTKPSKTK). The specificity for association with VLDL stretch occupies residues 269–281 (RLKSWFEPLVQDM).

The protein belongs to the apolipoprotein A1/A4/E family. In terms of assembly, homotetramer. May interact with ABCA1; functionally associated with ABCA1 in the biogenesis of HDLs. May interact with APP/A4 amyloid-beta peptide; the interaction is extremely stable in vitro but its physiological significance is unclear. May interact with MAPT. May interact with MAP2. In the cerebrospinal fluid, interacts with secreted SORL1. Interacts with PMEL; this allows the loading of PMEL luminal fragment on ILVs to induce fibril nucleation. In terms of processing, APOE exists as multiple glycosylated and sialylated glycoforms within cells and in plasma. The extent of glycosylation and sialylation are tissue and context specific. Post-translationally, glycated in plasma VLDL. Phosphorylated by FAM20C in the extracellular medium.

The protein resides in the secreted. It is found in the extracellular space. The protein localises to the extracellular matrix. Its subcellular location is the extracellular vesicle. It localises to the endosome. The protein resides in the multivesicular body. In terms of biological role, APOE is an apolipoprotein, a protein associating with lipid particles, that mainly functions in lipoprotein-mediated lipid transport between organs via the plasma and interstitial fluids. APOE is a core component of plasma lipoproteins and is involved in their production, conversion and clearance. Apolipoproteins are amphipathic molecules that interact both with lipids of the lipoprotein particle core and the aqueous environment of the plasma. As such, APOE associates with chylomicrons, chylomicron remnants, very low density lipoproteins (VLDL) and intermediate density lipoproteins (IDL) but shows a preferential binding to high-density lipoproteins (HDL). It also binds a wide range of cellular receptors including the LDL receptor/LDLR and the very low-density lipoprotein receptor/VLDLR that mediate the cellular uptake of the APOE-containing lipoprotein particles. Finally, APOE also has a heparin-binding activity and binds heparan-sulfate proteoglycans on the surface of cells, a property that supports the capture and the receptor-mediated uptake of APOE-containing lipoproteins by cells. The protein is Apolipoprotein E (APOE) of Pteropus pselaphon (Bonin flying fox).